Reading from the N-terminus, the 444-residue chain is 3-phosphoshikimate 1-carboxyvinyltransferase (444 aa).

3-phosphoshikimate-binding residues include K29, S30, and R34. K29 lines the phosphoenolpyruvate pocket. Residues G102 and R131 each contribute to the phosphoenolpyruvate site. The 3-phosphoshikimate site is built by S176, Q178, D326, and K353. A phosphoenolpyruvate-binding site is contributed by Q178. Catalysis depends on D326, which acts as the Proton acceptor. 2 residues coordinate phosphoenolpyruvate: R357 and R399.

It belongs to the EPSP synthase family. As to quaternary structure, monomer.

It localises to the cytoplasm. It carries out the reaction 3-phosphoshikimate + phosphoenolpyruvate = 5-O-(1-carboxyvinyl)-3-phosphoshikimate + phosphate. The protein operates within metabolic intermediate biosynthesis; chorismate biosynthesis; chorismate from D-erythrose 4-phosphate and phosphoenolpyruvate: step 6/7. Its function is as follows. Catalyzes the transfer of the enolpyruvyl moiety of phosphoenolpyruvate (PEP) to the 5-hydroxyl of shikimate-3-phosphate (S3P) to produce enolpyruvyl shikimate-3-phosphate and inorganic phosphate. The protein is 3-phosphoshikimate 1-carboxyvinyltransferase of Synechococcus sp. (strain JA-3-3Ab) (Cyanobacteria bacterium Yellowstone A-Prime).